We begin with the raw amino-acid sequence, 788 residues long: Endonuclease MutS2 (788 aa).

An ATP-binding site is contributed by 334–341 (GPNTGGKT). The Smr domain occupies 713-788 (LDLRGKRYEE…GNGATVVKFQ (76 aa)).

This sequence belongs to the DNA mismatch repair MutS family. MutS2 subfamily. Homodimer. Binds to stalled ribosomes, contacting rRNA.

Endonuclease that is involved in the suppression of homologous recombination and thus may have a key role in the control of bacterial genetic diversity. Its function is as follows. Acts as a ribosome collision sensor, splitting the ribosome into its 2 subunits. Detects stalled/collided 70S ribosomes which it binds and splits by an ATP-hydrolysis driven conformational change. Acts upstream of the ribosome quality control system (RQC), a ribosome-associated complex that mediates the extraction of incompletely synthesized nascent chains from stalled ribosomes and their subsequent degradation. Probably generates substrates for RQC. This is Endonuclease MutS2 from Enterococcus faecalis (strain ATCC 700802 / V583).